A 337-amino-acid polypeptide reads, in one-letter code: Holliday junction branch migration complex subunit RuvB (337 aa).

The segment at 4 to 186 is large ATPase domain (RuvB-L); the sequence is ADRLIAADNP…FGIVQRLEYY (183 aa). ATP is bound by residues I25, R26, G67, K70, T71, T72, 133–135, R176, Y186, and R223; that span reads EDY. T71 provides a ligand contact to Mg(2+). Residues 187 to 257 are small ATPAse domain (RuvB-S); sequence KVDDLQYIVQ…IADKALNMLD (71 aa). The head domain (RuvB-H) stretch occupies residues 260 to 337; that stretch reads VCGFDYMDRK…LHFGIDRPDK (78 aa). The DNA site is built by R315 and R320.

The protein belongs to the RuvB family. In terms of assembly, homohexamer. Forms an RuvA(8)-RuvB(12)-Holliday junction (HJ) complex. HJ DNA is sandwiched between 2 RuvA tetramers; dsDNA enters through RuvA and exits via RuvB. An RuvB hexamer assembles on each DNA strand where it exits the tetramer. Each RuvB hexamer is contacted by two RuvA subunits (via domain III) on 2 adjacent RuvB subunits; this complex drives branch migration. In the full resolvosome a probable DNA-RuvA(4)-RuvB(12)-RuvC(2) complex forms which resolves the HJ.

The protein localises to the cytoplasm. It carries out the reaction ATP + H2O = ADP + phosphate + H(+). The RuvA-RuvB-RuvC complex processes Holliday junction (HJ) DNA during genetic recombination and DNA repair, while the RuvA-RuvB complex plays an important role in the rescue of blocked DNA replication forks via replication fork reversal (RFR). RuvA specifically binds to HJ cruciform DNA, conferring on it an open structure. The RuvB hexamer acts as an ATP-dependent pump, pulling dsDNA into and through the RuvAB complex. RuvB forms 2 homohexamers on either side of HJ DNA bound by 1 or 2 RuvA tetramers; 4 subunits per hexamer contact DNA at a time. Coordinated motions by a converter formed by DNA-disengaged RuvB subunits stimulates ATP hydrolysis and nucleotide exchange. Immobilization of the converter enables RuvB to convert the ATP-contained energy into a lever motion, pulling 2 nucleotides of DNA out of the RuvA tetramer per ATP hydrolyzed, thus driving DNA branch migration. The RuvB motors rotate together with the DNA substrate, which together with the progressing nucleotide cycle form the mechanistic basis for DNA recombination by continuous HJ branch migration. Branch migration allows RuvC to scan DNA until it finds its consensus sequence, where it cleaves and resolves cruciform DNA. This is Holliday junction branch migration complex subunit RuvB from Aliivibrio salmonicida (strain LFI1238) (Vibrio salmonicida (strain LFI1238)).